Reading from the N-terminus, the 174-residue chain is Transcription antitermination protein NusB (174 aa).

This sequence belongs to the NusB family.

In terms of biological role, involved in transcription antitermination. Required for transcription of ribosomal RNA (rRNA) genes. Binds specifically to the boxA antiterminator sequence of the ribosomal RNA (rrn) operons. The chain is Transcription antitermination protein NusB from Rhodopseudomonas palustris (strain ATCC BAA-98 / CGA009).